Reading from the N-terminus, the 86-residue chain is UPF0473 protein Clos_1662 (86 aa).

The protein belongs to the UPF0473 family.

The sequence is that of UPF0473 protein Clos_1662 from Alkaliphilus oremlandii (strain OhILAs) (Clostridium oremlandii (strain OhILAs)).